A 121-amino-acid polypeptide reads, in one-letter code: Fluoride-specific ion channel FluC 2 (121 aa).

A run of 4 helical transmembrane segments spans residues 3–23, 27–47, 64–84, and 92–112; these read YLFVFIGGLFGALLRYVLSTL, SGLPLGTLIANIVGAFLMGYL, GVTTGLLGALTTFSTFQFELV, and IALLFIYGLTSYIGGILFCWF. Gly71 and Thr74 together coordinate Na(+).

It belongs to the fluoride channel Fluc/FEX (TC 1.A.43) family.

The protein localises to the cell membrane. It catalyses the reaction fluoride(in) = fluoride(out). Na(+) is not transported, but it plays an essential structural role and its presence is essential for fluoride channel function. Functionally, fluoride-specific ion channel. Important for reducing fluoride concentration in the cell, thus reducing its toxicity. The sequence is that of Fluoride-specific ion channel FluC 2 from Staphylococcus haemolyticus (strain JCSC1435).